The sequence spans 261 residues: Cytochrome c oxidase subunit 3 (261 aa).

At 1–15 (MTHQTHAYHMVNPSP) the chain is on the mitochondrial matrix side. The chain crosses the membrane as a helical span at residues 16–34 (WPLTGALSALLMTSGLAMW). Residues 35–40 (FHFNSV) lie on the Mitochondrial intermembrane side of the membrane. The helical transmembrane segment at 41 to 66 (TLLTLGLTTNMLTMYQWWRDIIREST) threads the bilayer. At 67–72 (FQGHHT) the chain is on the mitochondrial matrix side. Residues 73–105 (PTVQKGLRYGMILFIISEVLFFTGFFWAFYHSS) traverse the membrane as a helical segment. Over 106 to 128 (LAPTPELGGCWPPTGISPLNPLE) the chain is Mitochondrial intermembrane. A helical membrane pass occupies residues 129 to 152 (VPLLNTSVLLASGVSITWAHHSLM). At 153–155 (EGN) the chain is on the mitochondrial matrix side. The chain crosses the membrane as a helical span at residues 156-183 (RNHMLQALFITIALGVYFTLLQASEYYE). The Mitochondrial intermembrane segment spans residues 184–190 (APFTISD). The chain crosses the membrane as a helical span at residues 191–223 (GIYGSTFFVATGFHGLHVIIGSTFLIVCFFRQL). Residues 224-232 (KFHFTSNHH) are Mitochondrial matrix-facing. The helical transmembrane segment at 233–256 (FGFEAAAWYWHFVDVVWLFLYVSI) threads the bilayer. Residues 257 to 261 (YWWGS) lie on the Mitochondrial intermembrane side of the membrane.

It belongs to the cytochrome c oxidase subunit 3 family. Component of the cytochrome c oxidase (complex IV, CIV), a multisubunit enzyme composed of 14 subunits. The complex is composed of a catalytic core of 3 subunits MT-CO1, MT-CO2 and MT-CO3, encoded in the mitochondrial DNA, and 11 supernumerary subunits COX4I, COX5A, COX5B, COX6A, COX6B, COX6C, COX7A, COX7B, COX7C, COX8 and NDUFA4, which are encoded in the nuclear genome. The complex exists as a monomer or a dimer and forms supercomplexes (SCs) in the inner mitochondrial membrane with NADH-ubiquinone oxidoreductase (complex I, CI) and ubiquinol-cytochrome c oxidoreductase (cytochrome b-c1 complex, complex III, CIII), resulting in different assemblies (supercomplex SCI(1)III(2)IV(1) and megacomplex MCI(2)III(2)IV(2)).

Its subcellular location is the mitochondrion inner membrane. The catalysed reaction is 4 Fe(II)-[cytochrome c] + O2 + 8 H(+)(in) = 4 Fe(III)-[cytochrome c] + 2 H2O + 4 H(+)(out). Component of the cytochrome c oxidase, the last enzyme in the mitochondrial electron transport chain which drives oxidative phosphorylation. The respiratory chain contains 3 multisubunit complexes succinate dehydrogenase (complex II, CII), ubiquinol-cytochrome c oxidoreductase (cytochrome b-c1 complex, complex III, CIII) and cytochrome c oxidase (complex IV, CIV), that cooperate to transfer electrons derived from NADH and succinate to molecular oxygen, creating an electrochemical gradient over the inner membrane that drives transmembrane transport and the ATP synthase. Cytochrome c oxidase is the component of the respiratory chain that catalyzes the reduction of oxygen to water. Electrons originating from reduced cytochrome c in the intermembrane space (IMS) are transferred via the dinuclear copper A center (CU(A)) of subunit 2 and heme A of subunit 1 to the active site in subunit 1, a binuclear center (BNC) formed by heme A3 and copper B (CU(B)). The BNC reduces molecular oxygen to 2 water molecules using 4 electrons from cytochrome c in the IMS and 4 protons from the mitochondrial matrix. The sequence is that of Cytochrome c oxidase subunit 3 (MT-CO3) from Neotragus moschatus (Suni).